A 114-amino-acid polypeptide reads, in one-letter code: Large ribosomal subunit protein uL22 (114 aa).

The protein belongs to the universal ribosomal protein uL22 family. As to quaternary structure, part of the 50S ribosomal subunit.

This protein binds specifically to 23S rRNA; its binding is stimulated by other ribosomal proteins, e.g. L4, L17, and L20. It is important during the early stages of 50S assembly. It makes multiple contacts with different domains of the 23S rRNA in the assembled 50S subunit and ribosome. Functionally, the globular domain of the protein is located near the polypeptide exit tunnel on the outside of the subunit, while an extended beta-hairpin is found that lines the wall of the exit tunnel in the center of the 70S ribosome. The chain is Large ribosomal subunit protein uL22 from Lysinibacillus sphaericus (strain C3-41).